The primary structure comprises 499 residues: Signal recognition particle subunit SRP54 2 (499 aa).

The G-domain stretch occupies residues 1-295 (MVLAELGGSI…DVKPFVSRLL (295 aa)). Residues 108-115 (GLQGSGKT), 190-194 (DTSGR), and 248-251 (TKMD) contribute to the GTP site. Residues 296–499 (GMGDWSGFMD…MGGMFGGGDK (204 aa)) form an M-domain region.

This sequence belongs to the GTP-binding SRP family. SRP54 subfamily. Component of a signal recognition particle (SRP) complex that consists of a 7SL RNA molecule of 300 nucleotides and six protein subunits: SRP72, SRP68, SRP54, SRP19, SRP14 and SRP9.

Its subcellular location is the cytoplasm. The protein localises to the endoplasmic reticulum. It catalyses the reaction GTP + H2O = GDP + phosphate + H(+). In terms of biological role, component of the signal recognition particle (SRP) complex, a ribonucleoprotein complex that mediates the cotranslational targeting of secretory and membrane proteins to the endoplasmic reticulum (ER). As part of the SRP complex, associates with the SRP receptor (SR) component SRPRA to target secretory proteins to the endoplasmic reticulum membrane. Binds to the signal sequence of presecretory proteins when they emerge from the ribosomes. Displays basal GTPase activity, and stimulates reciprocal GTPase activation of the SR subunit SRPRA. Forms a guanosine 5'-triphosphate (GTP)-dependent complex with the SR subunit SRPRA. SR compaction and GTPase mediated rearrangement of SR drive SRP-mediated cotranslational protein translocation into the ER. Requires the presence of SRP9/SRP14 and/or SRP19 to stably interact with RNA. The sequence is that of Signal recognition particle subunit SRP54 2 from Solanum lycopersicum (Tomato).